The following is a 509-amino-acid chain: Dihydrolipoyl dehydrogenase, mitochondrial (509 aa).

A mitochondrion-targeting transit peptide spans 1 to 35; the sequence is MQSWSRVYCSLVKRGHFSRISHGLQGVSVVPLRTY. An N6-acetyllysine; alternate modification is found at Lys66. N6-succinyllysine; alternate is present on Lys66. Residues 71–80 and Lys89 each bind FAD; that span reads EKNETLGGTC. Cysteines 80 and 85 form a disulfide. Lys104, Lys122, Lys132, and Lys143 each carry N6-acetyllysine; alternate. N6-succinyllysine; alternate is present on residues Lys104, Lys122, Lys132, and Lys143. Gly154 contacts FAD. Residues Lys159 and Lys166 each carry the N6-succinyllysine modification. Position 183 to 185 (183 to 185) interacts with FAD; the sequence is TGS. NAD(+) is bound by residues 220 to 227 and Glu243; that span reads GAGVIGVE. N6-succinyllysine occurs at positions 273 and 277. Val278 is a binding site for NAD(+). Residues Ser285 and Ser297 each carry the phosphoserine modification. Gly314 provides a ligand contact to NAD(+). Lys346 is modified (N6-acetyllysine). FAD is bound by residues Asp355 and 361 to 364; that span reads MLAH. Lys410 carries the post-translational modification N6-acetyllysine; alternate. Lys410 bears the N6-succinyllysine; alternate mark. An N6-acetyllysine mark is found at Lys417 and Lys420. Lys430 is modified (N6-succinyllysine). His487 acts as the Proton acceptor in catalysis. Lys505 carries the post-translational modification N6-acetyllysine; alternate. Lys505 carries the post-translational modification N6-succinyllysine; alternate.

It belongs to the class-I pyridine nucleotide-disulfide oxidoreductase family. In terms of assembly, homodimer. Part of the multimeric pyruvate dehydrogenase complex that contains multiple copies of pyruvate dehydrogenase (subunits PDHA (PDHA1 or PDHA2) and PDHB, E1), dihydrolipoamide acetyltransferase (DLAT, E2) and lipoamide dehydrogenase (DLD, E3). These subunits are bound to an inner core composed of about 48 DLAT and 12 PDHX molecules (by non covalent bonds). The 2-oxoglutarate dehydrogenase complex is composed of OGDH (2-oxoglutarate dehydrogenase; E1), DLST (dihydrolipoamide succinyltransferase; E2), DLD (dihydrolipoamide dehydrogenase; E3) and the assembly factor KGD4. It contains multiple copies of the three enzymatic components (E1, E2 and E3). In the nucleus, the 2-oxoglutarate dehydrogenase complex associates with KAT2A. Interacts with PDHX. Requires FAD as cofactor. Post-translationally, tyrosine phosphorylated.

Its subcellular location is the mitochondrion matrix. The protein localises to the nucleus. It is found in the cell projection. The protein resides in the cilium. It localises to the flagellum. Its subcellular location is the cytoplasmic vesicle. The protein localises to the secretory vesicle. It is found in the acrosome. It carries out the reaction N(6)-[(R)-dihydrolipoyl]-L-lysyl-[protein] + NAD(+) = N(6)-[(R)-lipoyl]-L-lysyl-[protein] + NADH + H(+). Functionally, lipoamide dehydrogenase is a component of the glycine cleavage system as well as an E3 component of three alpha-ketoacid dehydrogenase complexes (pyruvate-, alpha-ketoglutarate-, and branched-chain amino acid-dehydrogenase complex). The 2-oxoglutarate dehydrogenase complex is mainly active in the mitochondrion. A fraction of the 2-oxoglutarate dehydrogenase complex also localizes in the nucleus and is required for lysine succinylation of histones: associates with KAT2A on chromatin and provides succinyl-CoA to histone succinyltransferase KAT2A. In monomeric form may have additional moonlighting function as serine protease. Involved in the hyperactivation of spermatazoa during capacitation and in the spermatazoal acrosome reaction. This is Dihydrolipoyl dehydrogenase, mitochondrial (DLD) from Bos taurus (Bovine).